A 204-amino-acid polypeptide reads, in one-letter code: Holliday junction resolvase RecU (204 aa).

Residues Thr89, Asp91, Asp104, and Gln123 each coordinate Mg(2+).

It belongs to the RecU family. It depends on Mg(2+) as a cofactor.

Its subcellular location is the cytoplasm. It catalyses the reaction Endonucleolytic cleavage at a junction such as a reciprocal single-stranded crossover between two homologous DNA duplexes (Holliday junction).. Endonuclease that resolves Holliday junction intermediates in genetic recombination. Cleaves mobile four-strand junctions by introducing symmetrical nicks in paired strands. Promotes annealing of linear ssDNA with homologous dsDNA. Required for DNA repair, homologous recombination and chromosome segregation. The sequence is that of Holliday junction resolvase RecU from Leuconostoc mesenteroides subsp. mesenteroides (strain ATCC 8293 / DSM 20343 / BCRC 11652 / CCM 1803 / JCM 6124 / NCDO 523 / NBRC 100496 / NCIMB 8023 / NCTC 12954 / NRRL B-1118 / 37Y).